We begin with the raw amino-acid sequence, 420 residues long: Ribosome biogenesis protein WDR12 homolog (420 aa).

The ubiquitin-like (UBL) domain stretch occupies residues 10-92 (VQVHLKTKQE…EDAIEIEYVE (83 aa)). WD repeat units follow at residues 104–142 (LHDD…LTIS), 143–185 (GHTA…NSVE), 192–231 (GHER…AVEG), 250–288 (GHRE…IKTE), 290–329 (STNK…GSVV), 335–375 (GHNA…APLY), and 379–417 (GHGE…ADDA).

Belongs to the WD repeat WDR12/YTM1 family.

It is found in the nucleus. The protein resides in the nucleolus. The protein localises to the nucleoplasm. In terms of biological role, required for maturation of ribosomal RNAs and formation of the large ribosomal subunit. This is Ribosome biogenesis protein WDR12 homolog from Drosophila yakuba (Fruit fly).